The sequence spans 454 residues: Serine/threonine-protein phosphatase C23G10.1 (454 aa).

Mn(2+) is bound by residues D196, H198, D224, and N256. The active-site Proton donor is H257. Positions 308 and 382 each coordinate Mn(2+).

This sequence belongs to the PPP phosphatase family. PP-1 subfamily. It depends on Mn(2+) as a cofactor.

It catalyses the reaction O-phospho-L-seryl-[protein] + H2O = L-seryl-[protein] + phosphate. The catalysed reaction is O-phospho-L-threonyl-[protein] + H2O = L-threonyl-[protein] + phosphate. The protein is Serine/threonine-protein phosphatase C23G10.1 of Caenorhabditis elegans.